The following is a 174-amino-acid chain: Guided entry of tail-anchored proteins factor 1 (174 aa).

Residues 1-8 (MSSAAADH) are Lumenal-facing. A helical transmembrane segment spans residues 9-29 (WAWLLVLSFVFGCNVLRILLP). Topologically, residues 30-99 (SFSSFMSRVL…VKARTAQLAK (70 aa)) are cytoplasmic. Residues 39-94 (LQKDAEQESQMRAEIQDMKQELSTVNMMDEFARYARLERKINKMTDKLKTHVKART) are a coiled coil. Positions 39–97 (LQKDAEQESQMRAEIQDMKQELSTVNMMDEFARYARLERKINKMTDKLKTHVKARTAQL) are interaction with GET3/TRC40. A helical membrane pass occupies residues 100-120 (IKWVISVAFYVLQAALMISLI). Residues 121-148 (WKYYSVPVAVVPSKWITPLDRLVAFPTR) are Lumenal-facing. The helical transmembrane segment at 149–169 (VAGGVGITCWILVCNKVVAIV) threads the bilayer. Topologically, residues 170–174 (LHPFS) are cytoplasmic.

It belongs to the WRB/GET1 family. Component of the Golgi to ER traffic (GET) complex, which is composed of GET1/WRB, CAMLG/GET2 and GET3/TRC40. Within the complex, GET1 and CAMLG form a heterotetramer which is stabilized by phosphatidylinositol binding and which binds to the GET3 homodimer. Interacts with CAMLG (via C-terminus). GET3 shows a higher affinity for CAMLG than for GET1.

Its subcellular location is the endoplasmic reticulum membrane. In terms of biological role, required for the post-translational delivery of tail-anchored (TA) proteins to the endoplasmic reticulum (ER). Together with CAMLG/GET2, acts as a membrane receptor for soluble GET3/TRC40, which recognizes and selectively binds the transmembrane domain of TA proteins in the cytosol. Required to ensure correct topology and ER insertion of CAMLG. The chain is Guided entry of tail-anchored proteins factor 1 from Homo sapiens (Human).